Consider the following 140-residue polypeptide: Phospholipase A2 (140 aa).

The first 21 residues, 1–21 (MNPAHLLVLAAVCISLSGASS), serve as a signal peptide directing secretion. A propeptide spanning residues 22–27 (IAPQPL) is cleaved from the precursor. Disulfide bonds link Cys-38/Cys-97, Cys-52/Cys-139, Cys-54/Cys-70, Cys-69/Cys-125, Cys-76/Cys-118, Cys-86/Cys-111, and Cys-104/Cys-116. N-linked (GlcNAc...) asparagine glycosylation is present at Asn-39. Ca(2+) contacts are provided by Tyr-53, Gly-55, and Gly-57. His-73 is an active-site residue. Asp-74 lines the Ca(2+) pocket. Asn-107 carries N-linked (GlcNAc...) asparagine glycosylation. Asp-119 is an active-site residue.

It belongs to the phospholipase A2 family. Group I subfamily. D49 sub-subfamily. Ca(2+) serves as cofactor. As to expression, expressed by the venom gland.

It is found in the secreted. It carries out the reaction a 1,2-diacyl-sn-glycero-3-phosphocholine + H2O = a 1-acyl-sn-glycero-3-phosphocholine + a fatty acid + H(+). Its function is as follows. PLA2 catalyzes the calcium-dependent hydrolysis of the 2-acyl groups in 3-sn-phosphoglycerides. This Micrurus altirostris (Uruguayan coral snake) protein is Phospholipase A2.